The primary structure comprises 383 residues: Interleukin-13 receptor subunit alpha-2 (383 aa).

Positions 1–21 are cleaved as a signal peptide; the sequence is MAFVHIRCLCFILLCTITGYS. Topologically, residues 22-334 are extracellular; it reads LEIKVNPPQD…WEGYTGPDSK (313 aa). Fibronectin type-III domains follow at residues 28–128, 131–219, and 234–332; these read PPQD…SDEG, ETKI…PIRS, and PPEF…TGPD. Cys59 and Cys107 form a disulfide bridge. Asn109 carries an N-linked (GlcNAc...) asparagine glycan. Cys139 and Cys149 are joined by a disulfide. The N-linked (GlcNAc...) asparagine glycan is linked to Asn162. Cysteines 178 and 191 form a disulfide. 2 N-linked (GlcNAc...) asparagine glycosylation sites follow: Asn209 and Asn293. A disulfide bridge connects residues Cys263 and Cys310. The WSXWS motif signature appears at 316–320; sequence WSEWS. The chain crosses the membrane as a helical span at residues 335 to 355; sequence IIFIVPVCLFFIFLLLLLCLI. The Cytoplasmic segment spans residues 356 to 383; it reads VEKEEPEPTLSLHVDLNKEVCAYEDTLC.

This sequence belongs to the type I cytokine receptor family. Type 5 subfamily. Interacts with IL4RA. Interacts with high affinity to interleukin-13 (IL13), but not to interleukin-4 (IL4). Cleaved by MMP8 leading to a soluble form that is also able to interact with IL13.

The protein localises to the cell membrane. Its subcellular location is the secreted. Cell surface receptor that plays a role in the regulation of IL-13-mediated responses. Functions as a decoy receptor that inhibits IL-13- and IL-4-mediated signal transduction via the JAK-STAT pathway and thereby modulates immune responses and inflammation. Serves as a functional signaling receptor for IL-13 in an alternative pathway involving AP-1 ultimately leading to the production of TGFB1. This chain is Interleukin-13 receptor subunit alpha-2 (Il13ra2), found in Mus musculus (Mouse).